A 346-amino-acid chain; its full sequence is Holliday junction branch migration complex subunit RuvB (346 aa).

Residues 1 to 11 (MTEQRTIASSA) show a composition bias toward polar residues. Positions 1–20 (MTEQRTIASSATREDEAADA) are disordered. Residues 1–183 (MTEQRTIASS…FGIVQRLEFY (183 aa)) are large ATPase domain (RuvB-L). Residues Ile-22, Arg-23, Gly-64, Lys-67, Thr-68, Thr-69, 130-132 (EDF), Arg-173, Tyr-183, and Arg-220 each bind ATP. Mg(2+) is bound at residue Thr-68. Residues 184–254 (SPQELTRIVI…VAQAAMQMLK (71 aa)) are small ATPAse domain (RuvB-S). Residues 257–346 (PEGFDELDRR…PAIGEPGDLF (90 aa)) are head domain (RuvB-H). DNA is bound by residues Arg-293, Arg-312, and Arg-317.

The protein belongs to the RuvB family. Homohexamer. Forms an RuvA(8)-RuvB(12)-Holliday junction (HJ) complex. HJ DNA is sandwiched between 2 RuvA tetramers; dsDNA enters through RuvA and exits via RuvB. An RuvB hexamer assembles on each DNA strand where it exits the tetramer. Each RuvB hexamer is contacted by two RuvA subunits (via domain III) on 2 adjacent RuvB subunits; this complex drives branch migration. In the full resolvosome a probable DNA-RuvA(4)-RuvB(12)-RuvC(2) complex forms which resolves the HJ.

Its subcellular location is the cytoplasm. The catalysed reaction is ATP + H2O = ADP + phosphate + H(+). Functionally, the RuvA-RuvB-RuvC complex processes Holliday junction (HJ) DNA during genetic recombination and DNA repair, while the RuvA-RuvB complex plays an important role in the rescue of blocked DNA replication forks via replication fork reversal (RFR). RuvA specifically binds to HJ cruciform DNA, conferring on it an open structure. The RuvB hexamer acts as an ATP-dependent pump, pulling dsDNA into and through the RuvAB complex. RuvB forms 2 homohexamers on either side of HJ DNA bound by 1 or 2 RuvA tetramers; 4 subunits per hexamer contact DNA at a time. Coordinated motions by a converter formed by DNA-disengaged RuvB subunits stimulates ATP hydrolysis and nucleotide exchange. Immobilization of the converter enables RuvB to convert the ATP-contained energy into a lever motion, pulling 2 nucleotides of DNA out of the RuvA tetramer per ATP hydrolyzed, thus driving DNA branch migration. The RuvB motors rotate together with the DNA substrate, which together with the progressing nucleotide cycle form the mechanistic basis for DNA recombination by continuous HJ branch migration. Branch migration allows RuvC to scan DNA until it finds its consensus sequence, where it cleaves and resolves cruciform DNA. The sequence is that of Holliday junction branch migration complex subunit RuvB from Xanthomonas campestris pv. campestris (strain ATCC 33913 / DSM 3586 / NCPPB 528 / LMG 568 / P 25).